An 83-amino-acid polypeptide reads, in one-letter code: Cytochrome b559 subunit alpha (83 aa).

The chain crosses the membrane as a helical span at residues Val21–Trp35. Heme is bound at residue His23.

This sequence belongs to the PsbE/PsbF family. Heterodimer of an alpha subunit and a beta subunit. PSII is composed of 1 copy each of membrane proteins PsbA, PsbB, PsbC, PsbD, PsbE, PsbF, PsbH, PsbI, PsbJ, PsbK, PsbL, PsbM, PsbT, PsbX, PsbY, PsbZ, Psb30/Ycf12, at least 3 peripheral proteins of the oxygen-evolving complex and a large number of cofactors. It forms dimeric complexes. Heme b is required as a cofactor.

It is found in the plastid. The protein localises to the chloroplast thylakoid membrane. This b-type cytochrome is tightly associated with the reaction center of photosystem II (PSII). PSII is a light-driven water:plastoquinone oxidoreductase that uses light energy to abstract electrons from H(2)O, generating O(2) and a proton gradient subsequently used for ATP formation. It consists of a core antenna complex that captures photons, and an electron transfer chain that converts photonic excitation into a charge separation. The sequence is that of Cytochrome b559 subunit alpha from Phalaenopsis aphrodite subsp. formosana (Moth orchid).